The primary structure comprises 282 residues: MKISMIFLPHFLYYTVPTFYLFGLLIMHNAAQHNYVISLTTEQKRRKHITEEFGKQNIPFEFFDAITPDIIEETAKKFNITLDRSPKAKLSDGEIGCALSHIVLWDLALENNLNYINIFEDDIHLGENAKELLEIDYISDDIHVLKLEANGKMFFKQPKSVKCDRNVYPMTVKQSGCAGYTVTAKGAKYLLELVKNKPLDVAVDSLVFEDFLHFKDYKIVQLSPGICVQDFVLHPDNPFESSLQEGRDRVHGNQRKSSILEKIKNEFGRVKIKMFGKQVPFK.

The protein belongs to the glycosyltransferase 25 family.

This Haemophilus influenzae (strain ATCC 51907 / DSM 11121 / KW20 / Rd) protein is Putative glycosyltransferase HI_0765.